Consider the following 162-residue polypeptide: Transcription elongation factor GreB (162 aa).

A coiled-coil region spans residues 52–76 (GKRRLREIDRRIRFLSKRLEALQII).

The protein belongs to the GreA/GreB family. GreB subfamily.

Its function is as follows. Necessary for efficient RNA polymerase transcription elongation past template-encoded arresting sites. The arresting sites in DNA have the property of trapping a certain fraction of elongating RNA polymerases that pass through, resulting in locked ternary complexes. Cleavage of the nascent transcript by cleavage factors such as GreA or GreB allows the resumption of elongation from the new 3'terminus. GreB releases sequences of up to 9 nucleotides in length. The protein is Transcription elongation factor GreB of Haemophilus ducreyi (strain 35000HP / ATCC 700724).